Consider the following 995-residue polypeptide: Beta-agarase A (995 aa).

The signal sequence occupies residues methionine 1 to alanine 20. Positions glycine 936–glycine 972 are disordered. The segment covering alanine 948–proline 965 has biased composition (pro residues).

Belongs to the glycosyl hydrolase 50 family.

The enzyme catalyses Hydrolysis of (1-&gt;4)-beta-D-galactosidic linkages in agarose, giving the tetramer as the predominant product.. Its function is as follows. Hydrolyzes agarose and also neoagarotetraose to yield neoagarobiose. The protein is Beta-agarase A (agaA) of Vibrio sp. (strain JT0107).